Reading from the N-terminus, the 32-residue chain is Delta-conotoxin-like CnVID (32 aa).

3 cysteine pairs are disulfide-bonded: C3–C18, C10–C22, and C17–C27. 4-hydroxyproline occurs at positions 6 and 14.

This sequence belongs to the conotoxin O1 superfamily. Expressed by the venom duct.

The protein localises to the secreted. Its function is as follows. Delta-conotoxins bind to site 6 of voltage-gated sodium channels (Nav) and inhibit the inactivation process. This toxin acts on Nav1.2/SCN2A, Nav1.3/SCN3A and Nav1.6/SCN8A (EC(50)=1.7 uM). The polypeptide is Delta-conotoxin-like CnVID (Conus consors (Singed cone)).